Reading from the N-terminus, the 1088-residue chain is MGKYNLILSEYLSFIYNSQSAVQIPIYYSSNSELENRCIEFHAKCLENSKNGLSLKKLFSEYSDVIQNATLLSILSYSYDKYNAVERKLVKYARSKPLEADLTVNELDYENNKITSELFPTEEEYTDSLMDPAILTSLSSNLNAVMFWLEKHENDTAEKLKIYKRRLDLFIIVASTVNKYGVPRHNAKYRYEYDVMKDKPYYLVTWANSSIEMLMSVFSHEDYLIAKELIVLSYSNRSTLAKLVSSPMSILVALVDINGTFITNEELELEFSNKYVRAIVPDQTFDELKQMLDNMRKAGLVDIPKMIQDWLIDCSIEKFSLMAKIYSWSFHVGFRKQKMLDAALDQLKTEYTEDVDDEMYREYTMLIRDEVVKMLEESVKHDDHLLQDSELAGLLSMSSASNGESRQLKFGRKTIFSTKKNMHVMDDMANGRYTPGIIPPVNADKPIPLGRRDVPGRRTRIIFILPYEYFIAQHAVVEKMLIYAKHTREYAEFYSQSNQLLSYGDVTRFLSNNAMVLYTDVSQWDSSQHNTQPFRKGIIMGLDILANMTNDAKVVQTLNLYKQTQINLMDSYVQIPDGNVIKKIQYGAVASGEKQTKAANSIANLALIKTVLSRISNKYSFATKIIRVDGDDNYAVLQFNTEVTKQMVQDVSNDVRETYARMNAKVKALVSTVGIEIAKRYIAGGKIFFRAGINLLNNEKRGQSTQWDQAAVLYSNYIVNRLRGFETDREFILTKIMQMTSVAITGSLRLFPSERVLTTNSTFKVFDSEDFIIEYGTTDDEVYIQRAFMSLSSQKSGIADEISASSTFKNYVSKLSEQLLFSKNNIVSRGIALTEKAKLNSYAPISLEKRRAQISALLTMLQKPVTFKSNKITINDILKDIKPFFTLSEAHLPMQYQKFMPTLPENVQYIIQCIGSRTYQIEDDGSKSAISRLISKYSVYKPSIEELYKVISLHENEIQLYLISLGIPKIDADTYVGSKIYSQDKYRILESYVYNLLSINYGCYQLFDFNSPDLEKLIRIPFKGKIPAVTFILHLYAKLEVINYAIKNGSWISLFCNYPKSEMIKLWKKMWNITSLRSPYTNANFFQD.

The 187-residue stretch at leucine 501–isoleucine 687 folds into the RdRp catalytic domain.

The protein belongs to the reoviridae RNA-directed RNA polymerase family. In terms of assembly, interacts with VP3 (Potential). Interacts with VP2; this interaction activates VP1. Interacts with NSP5; this interaction is probably necessary for the formation of functional virus factories. Interacts with NSP2; this interaction is weak. Mg(2+) is required as a cofactor.

Its subcellular location is the virion. The enzyme catalyses RNA(n) + a ribonucleoside 5'-triphosphate = RNA(n+1) + diphosphate. Its function is as follows. RNA-directed RNA polymerase that is involved in both transcription and genome replication. Together with VP3 capping enzyme, forms an enzyme complex positioned near the channels situated at each of the five-fold vertices of the core. Following infection, the outermost layer of the virus is lost, leaving a double-layered particle (DLP) made up of the core and VP6 shell. VP1 then catalyzes the transcription of fully conservative plus-strand genomic RNAs that are extruded through the DLP's channels into the cytoplasm where they function as mRNAs for translation of viral proteins. One copy of each of the viral (+)RNAs is also recruited during core assembly, together with newly synthesized polymerase complexes and VP2. The polymerase of these novo-formed particles catalyzes the synthesis of complementary minus-strands leading to dsRNA formation. To do so, the polymerase specifically recognizes and binds 4 bases 5'-UGUG-3' in the conserved 3'-sequence of plus-strand RNA templates. VP2 presumably activates the autoinhibited VP1-RNA complex to coordinate packaging and genome replication. Once dsRNA synthesis is complete, the polymerase switches to the transcriptional mode, thus providing secondary transcription. The sequence is that of RNA-directed RNA polymerase from Homo sapiens (Human).